We begin with the raw amino-acid sequence, 344 residues long: Phosphoribosylformylglycinamidine cyclo-ligase (344 aa).

This sequence belongs to the AIR synthase family.

Its subcellular location is the cytoplasm. It catalyses the reaction 2-formamido-N(1)-(5-O-phospho-beta-D-ribosyl)acetamidine + ATP = 5-amino-1-(5-phospho-beta-D-ribosyl)imidazole + ADP + phosphate + H(+). Its pathway is purine metabolism; IMP biosynthesis via de novo pathway; 5-amino-1-(5-phospho-D-ribosyl)imidazole from N(2)-formyl-N(1)-(5-phospho-D-ribosyl)glycinamide: step 2/2. This chain is Phosphoribosylformylglycinamidine cyclo-ligase, found in Anaeromyxobacter sp. (strain Fw109-5).